The chain runs to 179 residues: Large ribosomal subunit protein uL6 (179 aa).

It belongs to the universal ribosomal protein uL6 family. Part of the 50S ribosomal subunit.

In terms of biological role, this protein binds to the 23S rRNA, and is important in its secondary structure. It is located near the subunit interface in the base of the L7/L12 stalk, and near the tRNA binding site of the peptidyltransferase center. In Alkaliphilus oremlandii (strain OhILAs) (Clostridium oremlandii (strain OhILAs)), this protein is Large ribosomal subunit protein uL6.